We begin with the raw amino-acid sequence, 494 residues long: MDLSNNTMSLSVRTPGLSRRLSSQSVIGRPRGMSASSVGSGYGGSAFGFGASCGGGFSAASMFGSSSGFGGGSGSSMAGGLGAGYGRALGGGSFGGLGMGFGGSPGGGSLGILSGNDGGLLSGSEKETMQNLNDRLASYLDKVRALEEANTELENKIREWYETRGTGTADASQSDYSKYYPLIEDLRNKIISASIGNAQLLLQIDNARLAAEDFRMKYENELALRQGVEADINGLRRVLDELTLTRTDLEMQIESLNEELAYMKKNHEDELQSFRVGGPGEVSVEMDAAPGVDLTRLLNDMRAQYETIAEQNRKDAEAWFIEKSGELRKEISTNTEQLQSSKSEVTDLRRAFQNLEIELQSQLAMKKSLEDSLAEAEGDYCAQLSQVQQLISNLEAQLLQVRADAERQNVDHQRLLNVKARLELEIETYRRLLDGEAQGDGLEESLFVTDSKSQAQSTDSSKDPTKTRKIKTVVQEMVNGEVVSSQVQEIEELM.

Polar residues predominate over residues 1-12 (MDLSNNTMSLSV). A disordered region spans residues 1-32 (MDLSNNTMSLSVRTPGLSRRLSSQSVIGRPRG). Positions 1–124 (MDLSNNTMSL…GNDGGLLSGS (124 aa)) are head. The coil 1A stretch occupies residues 125 to 160 (EKETMQNLNDRLASYLDKVRALEEANTELENKIREW). Residues 125-440 (EKETMQNLND…RLLDGEAQGD (316 aa)) enclose the IF rod domain. The tract at residues 164–182 (RGTGTADASQSDYSKYYPL) is linker 1. The segment at 183–274 (IEDLRNKIIS…KNHEDELQSF (92 aa)) is coil 1B. The tract at residues 275 to 297 (RVGGPGEVSVEMDAAPGVDLTRL) is linker 12. Positions 298-435 (LNDMRAQYET…IETYRRLLDG (138 aa)) are coil 2. Residues 436–494 (EAQGDGLEESLFVTDSKSQAQSTDSSKDPTKTRKIKTVVQEMVNGEVVSSQVQEIEELM) are tail. A disordered region spans residues 446–468 (LFVTDSKSQAQSTDSSKDPTKTR). A compositionally biased stretch (polar residues) spans 448–459 (VTDSKSQAQSTD).

This sequence belongs to the intermediate filament family. In terms of assembly, heterotetramer of two type I and two type II keratins. Keratin-3 associates with keratin-12. As to expression, expressed in the corneal epithelium (at protein level).

Functionally, involved in corneal epithelium organization, integrity and corneal keratin expression. The chain is Keratin, type I cytoskeletal 12 (KRT12) from Homo sapiens (Human).